A 216-amino-acid polypeptide reads, in one-letter code: Ribosomal RNA large subunit methyltransferase E (216 aa).

S-adenosyl-L-methionine contacts are provided by glycine 60, tryptophan 62, aspartate 80, aspartate 96, and aspartate 121. The Proton acceptor role is filled by lysine 161.

Belongs to the class I-like SAM-binding methyltransferase superfamily. RNA methyltransferase RlmE family.

The protein resides in the cytoplasm. It carries out the reaction uridine(2552) in 23S rRNA + S-adenosyl-L-methionine = 2'-O-methyluridine(2552) in 23S rRNA + S-adenosyl-L-homocysteine + H(+). Its function is as follows. Specifically methylates the uridine in position 2552 of 23S rRNA at the 2'-O position of the ribose in the fully assembled 50S ribosomal subunit. In Pseudomonas savastanoi pv. phaseolicola (strain 1448A / Race 6) (Pseudomonas syringae pv. phaseolicola (strain 1448A / Race 6)), this protein is Ribosomal RNA large subunit methyltransferase E.